Here is a 170-residue protein sequence, read N- to C-terminus: Phosphopantetheine adenylyltransferase (170 aa).

Threonine 9 is a binding site for substrate. ATP-binding positions include 9–10 (TF) and histidine 17. 3 residues coordinate substrate: lysine 41, leucine 73, and arginine 87. Residues 88-90 (GLR), glutamate 98, and 123-129 (YQFISGT) contribute to the ATP site.

Belongs to the bacterial CoaD family. As to quaternary structure, homohexamer. Mg(2+) is required as a cofactor.

Its subcellular location is the cytoplasm. The enzyme catalyses (R)-4'-phosphopantetheine + ATP + H(+) = 3'-dephospho-CoA + diphosphate. It functions in the pathway cofactor biosynthesis; coenzyme A biosynthesis; CoA from (R)-pantothenate: step 4/5. Functionally, reversibly transfers an adenylyl group from ATP to 4'-phosphopantetheine, yielding dephospho-CoA (dPCoA) and pyrophosphate. This is Phosphopantetheine adenylyltransferase from Bordetella petrii (strain ATCC BAA-461 / DSM 12804 / CCUG 43448).